Consider the following 431-residue polypeptide: Glutamate-1-semialdehyde 2,1-aminomutase (431 aa).

Residue Lys-269 is modified to N6-(pyridoxal phosphate)lysine.

The protein belongs to the class-III pyridoxal-phosphate-dependent aminotransferase family. HemL subfamily. Homodimer. The cofactor is pyridoxal 5'-phosphate.

The protein resides in the cytoplasm. It carries out the reaction (S)-4-amino-5-oxopentanoate = 5-aminolevulinate. It functions in the pathway porphyrin-containing compound metabolism; protoporphyrin-IX biosynthesis; 5-aminolevulinate from L-glutamyl-tRNA(Glu): step 2/2. The protein operates within porphyrin-containing compound metabolism; chlorophyll biosynthesis. This is Glutamate-1-semialdehyde 2,1-aminomutase from Chlorobium limicola (strain DSM 245 / NBRC 103803 / 6330).